Reading from the N-terminus, the 81-residue chain is Sulfur carrier protein TusA (81 aa).

Cysteine 19 serves as the catalytic Cysteine persulfide intermediate.

The protein belongs to the sulfur carrier protein TusA family. Interacts with IscS.

The protein resides in the cytoplasm. Its pathway is tRNA modification. Its function is as follows. Sulfur carrier protein involved in sulfur trafficking in the cell. Part of a sulfur-relay system required for 2-thiolation during synthesis of 2-thiouridine of the modified wobble base 5-methylaminomethyl-2-thiouridine (mnm(5)s(2)U) in tRNA. Interacts with IscS and stimulates its cysteine desulfurase activity. Accepts an activated sulfur from IscS, which is then transferred to TusD, and thus determines the direction of sulfur flow from IscS to 2-thiouridine formation. Also appears to be involved in sulfur transfer for the biosynthesis of molybdopterin. The chain is Sulfur carrier protein TusA from Citrobacter koseri (strain ATCC BAA-895 / CDC 4225-83 / SGSC4696).